Here is a 312-residue protein sequence, read N- to C-terminus: Serpentine receptor class gamma-31 (312 aa).

Transmembrane regions (helical) follow at residues 6–26 (LITQ…TVVF), 38–58 (FLKL…NFYI), 92–112 (FIFC…LTSI), 132–152 (TYIL…PLLV), 180–200 (FILV…IICW), 218–238 (LFLV…IAML), and 259–279 (LLSP…LIIF).

It belongs to the nematode receptor-like protein srg family.

The protein resides in the membrane. The polypeptide is Serpentine receptor class gamma-31 (srg-31) (Caenorhabditis elegans).